The chain runs to 1976 residues: Myosin-10 (1976 aa).

Arg18 bears the Omega-N-methylarginine mark. In terms of domain architecture, Myosin N-terminal SH3-like spans 31–81; that stretch reads TAKKLVWIPSERHGFEAASIKEERGDEVMVELAENGKKAMVNKDDIQKMNP. A Myosin motor domain is found at 85–783; the sequence is SKVEDMAELT…VLAHLEEERD (699 aa). 178–185 contributes to the ATP binding site; it reads GESGAGKT. N6-acetyllysine is present on Lys442. Residues 661–683 are actin-binding; that stretch reads LTKLMATLRNTNPNFVRCIIPNH. The IQ domain maps to 786–815; the sequence is ITDIIIFFQAVCRGYLARKAFAKKQQQLSA. Residues 845–1976 are a coiled coil; sequence LQVTRQEEEL…VNETQPPQSE (1132 aa). The tract at residues 1125-1175 is disordered; sequence EDFESEKASRNKAEKQKRDLSEELEALKTELEDTLDTTAAQQELRTKREQE. The segment covering 1129–1155 has biased composition (basic and acidic residues); it reads SEKASRNKAEKQKRDLSEELEALKTEL. Ser1145 carries the post-translational modification Phosphoserine. N6-acetyllysine occurs at positions 1241, 1301, and 1645. Disordered regions lie at residues 1697 to 1718 and 1874 to 1976; these read ASSERARRHAEQERDELADEIA and KANA…PQSE. The span at 1698-1708 shows a compositional bias: basic and acidic residues; sequence SSERARRHAEQ. Arg1930 carries the post-translational modification Omega-N-methylarginine. Ser1935, Ser1937, Ser1938, and Ser1939 each carry phosphoserine. Residue Arg1940 is modified to Omega-N-methylarginine. Phosphoserine is present on residues Ser1952 and Ser1956. Phosphothreonine is present on Thr1960. Polar residues predominate over residues 1967–1976; the sequence is VNETQPPQSE. The residue at position 1975 (Ser1975) is a Phosphoserine.

The protein belongs to the TRAFAC class myosin-kinesin ATPase superfamily. Myosin family. In terms of assembly, myosin is a hexameric protein that consists of 2 heavy chain subunits (MHC), 2 alkali light chain subunits (MLC) and 2 regulatory light chain subunits (MLC-2). Interacts with PLEKHG6. Interacts with ECPAS. Interacts with KIF26B. Interacts with LARP6. Interacts with MCC. Interacts with CFAP95. Phosphorylated by ABL2.

Its subcellular location is the cell projection. It localises to the lamellipodium. Its function is as follows. Involved with LARP6 in the stabilization of type I collagen mRNAs for CO1A1 and CO1A2. During cell spreading, plays an important role in cytoskeleton reorganization, focal contacts formation (in the central part but not the margins of spreading cells), and lamellipodial extension; this function is mechanically antagonized by MYH9. Cellular myosin that appears to play a role in cytokinesis, cell shape, and specialized functions such as secretion and capping. This is Myosin-10 (Myh10) from Rattus norvegicus (Rat).